A 592-amino-acid polypeptide reads, in one-letter code: Ferric-chelate reductase 1 (592 aa).

The helical transmembrane segment at 2–22 (AVSGFTLGTCILLLHISYVAN) threads the bilayer. A Reelin domain is found at 13-179 (LLLHISYVAN…FTTPKATVVP (167 aa)). 3 N-linked (GlcNAc...) asparagine glycosylation sites follow: N138, N308, and N321. The DOMON domain maps to 216 to 331 (EASCVFLSFT…TSYYIFLADG (116 aa)). Residues 335–534 (DGRIYKHSQQ…VGTEVVLEVH (200 aa)) form the Cytochrome b561 domain. A helical membrane pass occupies residues 372–392 (VHGALMFVAWMTTVSIGVLVA). Residues H373 and H414 each contribute to the heme b site. The next 2 membrane-spanning stretches (helical) occupy residues 415-435 (RMLM…PFIY) and 446-466 (HPYL…LAVF). Heme b-binding residues include H446 and H482. A run of 3 helical transmembrane segments spans residues 491–511 (IIAV…LPDS), 515–535 (YAMT…EVHA), and 569–589 (AVLA…LSAI).

It belongs to the FRRS1 family. It depends on heme b as a cofactor.

The protein localises to the membrane. Its function is as follows. Ferric-chelate reductases reduce Fe(3+) to Fe(2+) before its transport from the endosome to the cytoplasm. The sequence is that of Ferric-chelate reductase 1 (FRRS1) from Homo sapiens (Human).